The sequence spans 277 residues: Outer plastidial membrane protein porin (277 aa).

The protein belongs to the eukaryotic mitochondrial porin (TC 1.B.8.1) family.

The protein localises to the plastid outer membrane. Functionally, forms a channel through the cell membrane that allows diffusion of small hydrophilic molecules. The channel adopts an open conformation at low or zero membrane potential and a closed conformation at potentials above 30-40 mV. The open state has a weak anion selectivity whereas the closed state is cation-selective. The chain is Outer plastidial membrane protein porin (POR1) from Zea mays (Maize).